Reading from the N-terminus, the 434-residue chain is Ribulose bisphosphate carboxylase-like protein (434 aa).

Mg(2+)-binding residues include Lys198, Asp200, and Glu201. Lys198 carries the N6-carboxylysine modification.

It belongs to the RuBisCO large chain family. Type IV subfamily. In terms of assembly, homodimer. The cofactor is Mg(2+).

Its function is as follows. May be involved in sulfur metabolism and oxidative stress response. Does not show RuBisCO activity. This Chlorobaculum thiosulfatiphilum (Chlorobium limicola f.sp. thiosulfatophilum) protein is Ribulose bisphosphate carboxylase-like protein.